A 613-amino-acid chain; its full sequence is Dihydroxy-acid dehydratase (613 aa).

Residue Asp-81 coordinates Mg(2+). Residue Cys-122 coordinates [2Fe-2S] cluster. Mg(2+) contacts are provided by Asp-123 and Lys-124. Lys-124 is subject to N6-carboxylysine. Position 195 (Cys-195) interacts with [2Fe-2S] cluster. Glu-491 lines the Mg(2+) pocket. The active-site Proton acceptor is the Ser-517.

This sequence belongs to the IlvD/Edd family. In terms of assembly, homodimer. [2Fe-2S] cluster serves as cofactor. Mg(2+) is required as a cofactor.

It catalyses the reaction (2R)-2,3-dihydroxy-3-methylbutanoate = 3-methyl-2-oxobutanoate + H2O. It carries out the reaction (2R,3R)-2,3-dihydroxy-3-methylpentanoate = (S)-3-methyl-2-oxopentanoate + H2O. It functions in the pathway amino-acid biosynthesis; L-isoleucine biosynthesis; L-isoleucine from 2-oxobutanoate: step 3/4. The protein operates within amino-acid biosynthesis; L-valine biosynthesis; L-valine from pyruvate: step 3/4. Its function is as follows. Functions in the biosynthesis of branched-chain amino acids. Catalyzes the dehydration of (2R,3R)-2,3-dihydroxy-3-methylpentanoate (2,3-dihydroxy-3-methylvalerate) into 2-oxo-3-methylpentanoate (2-oxo-3-methylvalerate) and of (2R)-2,3-dihydroxy-3-methylbutanoate (2,3-dihydroxyisovalerate) into 2-oxo-3-methylbutanoate (2-oxoisovalerate), the penultimate precursor to L-isoleucine and L-valine, respectively. This chain is Dihydroxy-acid dehydratase, found in Aeromonas hydrophila subsp. hydrophila (strain ATCC 7966 / DSM 30187 / BCRC 13018 / CCUG 14551 / JCM 1027 / KCTC 2358 / NCIMB 9240 / NCTC 8049).